A 205-amino-acid polypeptide reads, in one-letter code: Putative lipoprotein LppC (205 aa).

The N-terminal stretch at 1-27 is a signal peptide; the sequence is MESPMTSTLHRTPLATAGLALVVALGG. Cys-28 carries N-palmitoyl cysteine lipidation. The S-diacylglycerol cysteine moiety is linked to residue Cys-28. The interval 126–145 is disordered; it reads GSTADGQTPAGGHSVPNSGG.

Belongs to the UPF0098 family.

The protein localises to the cell membrane. The polypeptide is Putative lipoprotein LppC (lppC) (Mycobacterium tuberculosis (strain CDC 1551 / Oshkosh)).